The following is a 177-amino-acid chain: Large ribosomal subunit protein uL6 (177 aa).

The protein belongs to the universal ribosomal protein uL6 family. As to quaternary structure, part of the 50S ribosomal subunit.

In terms of biological role, this protein binds to the 23S rRNA, and is important in its secondary structure. It is located near the subunit interface in the base of the L7/L12 stalk, and near the tRNA binding site of the peptidyltransferase center. This chain is Large ribosomal subunit protein uL6, found in Stutzerimonas stutzeri (strain A1501) (Pseudomonas stutzeri).